Consider the following 476-residue polypeptide: Ribulose bisphosphate carboxylase large chain (476 aa).

The propeptide occupies 1-2 (MS). Proline 3 carries the post-translational modification N-acetylproline. Position 14 is an N6,N6,N6-trimethyllysine (lysine 14). Asparagine 123 and threonine 173 together coordinate substrate. Lysine 175 acts as the Proton acceptor in catalysis. Position 177 (lysine 177) interacts with substrate. 3 residues coordinate Mg(2+): lysine 201, aspartate 203, and glutamate 204. Lysine 201 carries the N6-carboxylysine modification. Histidine 294 functions as the Proton acceptor in the catalytic mechanism. Arginine 295, histidine 327, and serine 379 together coordinate substrate.

Belongs to the RuBisCO large chain family. Type I subfamily. As to quaternary structure, heterohexadecamer of 8 large chains and 8 small chains; disulfide-linked. The disulfide link is formed within the large subunit homodimers. Mg(2+) serves as cofactor. In terms of processing, the disulfide bond which can form in the large chain dimeric partners within the hexadecamer appears to be associated with oxidative stress and protein turnover.

The protein resides in the plastid. It is found in the chloroplast. It carries out the reaction 2 (2R)-3-phosphoglycerate + 2 H(+) = D-ribulose 1,5-bisphosphate + CO2 + H2O. The catalysed reaction is D-ribulose 1,5-bisphosphate + O2 = 2-phosphoglycolate + (2R)-3-phosphoglycerate + 2 H(+). Its function is as follows. RuBisCO catalyzes two reactions: the carboxylation of D-ribulose 1,5-bisphosphate, the primary event in carbon dioxide fixation, as well as the oxidative fragmentation of the pentose substrate in the photorespiration process. Both reactions occur simultaneously and in competition at the same active site. In Brachypodium distachyon (Purple false brome), this protein is Ribulose bisphosphate carboxylase large chain.